The primary structure comprises 293 residues: ATP synthase gamma chain (293 aa).

The protein belongs to the ATPase gamma chain family. F-type ATPases have 2 components, CF(1) - the catalytic core - and CF(0) - the membrane proton channel. CF(1) has five subunits: alpha(3), beta(3), gamma(1), delta(1), epsilon(1). CF(0) has three main subunits: a, b and c.

It is found in the cell inner membrane. In terms of biological role, produces ATP from ADP in the presence of a proton gradient across the membrane. The gamma chain is believed to be important in regulating ATPase activity and the flow of protons through the CF(0) complex. The polypeptide is ATP synthase gamma chain (Sinorhizobium fredii (strain NBRC 101917 / NGR234)).